The primary structure comprises 383 residues: Neuropeptide Y receptor type 1 (383 aa).

The Extracellular portion of the chain corresponds to 1–44 (MNSTLSSQVENHSIYYNFSEKNSQFLAFENDDCHLPLAMIFTLA). Residues N2, N11, and N17 are each glycosylated (N-linked (GlcNAc...) asparagine). Residues 45-65 (LAYGAVIILGVSGNLALIIII) traverse the membrane as a helical segment. Residues 66-76 (LKQKEMRNVTN) lie on the Cytoplasmic side of the membrane. The chain crosses the membrane as a helical span at residues 77–97 (ILIVNLSFSDLLVAIMCLPFT). The Extracellular portion of the chain corresponds to 98-116 (FVYTLMDHWVFGEVMCKLN). Residues C113 and C198 are joined by a disulfide bond. Residues 117 to 137 (PFVQCVSITVSIFSLVLIAVE) traverse the membrane as a helical segment. Residues 138–154 (RHQLIINPRGWRPSNRH) lie on the Cytoplasmic side of the membrane. A helical transmembrane segment spans residues 155–175 (AYVGIAVIWVLAVASSLPFLI). Residues 176–211 (YQVLTDEPFQNVTLDAFKDKYVCFDKFLSDSHRLSY) lie on the Extracellular side of the membrane. Residues 212–232 (TTLLLVLQYFGPLCFIFICYF) form a helical membrane-spanning segment. The Cytoplasmic portion of the chain corresponds to 233 to 260 (KIYIRLKRRNNMMDKMRDNKYRSSETKR). Residues 261–281 (INVMLLSIVVAFAVCWLPLTI) form a helical membrane-spanning segment. The Extracellular portion of the chain corresponds to 282-299 (FNTVFDWNHQIIATCNHN). Residues 300-320 (LLFLLCHLTAMISTCINPIFY) traverse the membrane as a helical segment. The Cytoplasmic segment spans residues 321-383 (GFLNKNFQRD…KIHSDDNEKI (63 aa)). C338 carries S-palmitoyl cysteine lipidation. S368 is modified (phosphoserine).

This sequence belongs to the G-protein coupled receptor 1 family.

It is found in the cell membrane. Functionally, receptor for neuropeptide Y and peptide YY. The sequence is that of Neuropeptide Y receptor type 1 (NPY1R) from Sus scrofa (Pig).